A 223-amino-acid chain; its full sequence is Phosphoribosylformylglycinamidine synthase subunit PurQ (223 aa).

A Glutamine amidotransferase type-1 domain is found at 2 to 223; the sequence is KFAVIQFPGS…ASVLKNFVGK (222 aa). C86 functions as the Nucleophile in the catalytic mechanism. Residues H195 and E197 contribute to the active site.

Part of the FGAM synthase complex composed of 1 PurL, 1 PurQ and 2 PurS subunits.

Its subcellular location is the cytoplasm. It catalyses the reaction N(2)-formyl-N(1)-(5-phospho-beta-D-ribosyl)glycinamide + L-glutamine + ATP + H2O = 2-formamido-N(1)-(5-O-phospho-beta-D-ribosyl)acetamidine + L-glutamate + ADP + phosphate + H(+). The catalysed reaction is L-glutamine + H2O = L-glutamate + NH4(+). The protein operates within purine metabolism; IMP biosynthesis via de novo pathway; 5-amino-1-(5-phospho-D-ribosyl)imidazole from N(2)-formyl-N(1)-(5-phospho-D-ribosyl)glycinamide: step 1/2. Part of the phosphoribosylformylglycinamidine synthase complex involved in the purines biosynthetic pathway. Catalyzes the ATP-dependent conversion of formylglycinamide ribonucleotide (FGAR) and glutamine to yield formylglycinamidine ribonucleotide (FGAM) and glutamate. The FGAM synthase complex is composed of three subunits. PurQ produces an ammonia molecule by converting glutamine to glutamate. PurL transfers the ammonia molecule to FGAR to form FGAM in an ATP-dependent manner. PurS interacts with PurQ and PurL and is thought to assist in the transfer of the ammonia molecule from PurQ to PurL. This is Phosphoribosylformylglycinamidine synthase subunit PurQ from Lactococcus lactis subsp. lactis (strain IL1403) (Streptococcus lactis).